Consider the following 315-residue polypeptide: Long form salivary protein D7L2 (315 aa).

The N-terminal stretch at 1–18 is a signal peptide; sequence MIVAPVVLSIFLQLFVQA. 4 cysteine pairs are disulfide-bonded: cysteine 37-cysteine 73, cysteine 69-cysteine 128, cysteine 178-cysteine 211, and cysteine 252-cysteine 263.

Belongs to the PBP/GOBP family. Interacts with host coagulation factor XII/F12 (inactive and activated). Interacts with host coagulation factor XI/F11 (inactive).

It localises to the secreted. Its function is as follows. Modulates blood feeding of female mosquitoes on vertebrate species by binding and sequestering different mediators involved in the host response. Binds leukotriene B4 and leukotriene D4. Exhibits anticoagulant activity targeting the intrinsic coagulation pathway; binds coagulation factors XII and XI, preventing generation of activated FXIIa and FXIa. This Anopheles gambiae (African malaria mosquito) protein is Long form salivary protein D7L2.